Here is a 459-residue protein sequence, read N- to C-terminus: Siroheme synthase (459 aa).

The precorrin-2 dehydrogenase /sirohydrochlorin ferrochelatase stretch occupies residues Met-1–Thr-204. Residues Asp-22–Val-23 and Leu-43–Thr-44 contribute to the NAD(+) site. Ser-128 bears the Phosphoserine mark. Residues Gly-216–Asp-459 form a uroporphyrinogen-III C-methyltransferase region. Pro-225 contributes to the S-adenosyl-L-methionine binding site. Catalysis depends on Asp-248, which acts as the Proton acceptor. Lys-270 acts as the Proton donor in catalysis. S-adenosyl-L-methionine is bound by residues Gly-301 to Asp-303, Ile-306, Thr-331 to Ala-332, Met-382, and Gly-411.

This sequence in the N-terminal section; belongs to the precorrin-2 dehydrogenase / sirohydrochlorin ferrochelatase family. The protein in the C-terminal section; belongs to the precorrin methyltransferase family.

It carries out the reaction uroporphyrinogen III + 2 S-adenosyl-L-methionine = precorrin-2 + 2 S-adenosyl-L-homocysteine + H(+). The enzyme catalyses precorrin-2 + NAD(+) = sirohydrochlorin + NADH + 2 H(+). It catalyses the reaction siroheme + 2 H(+) = sirohydrochlorin + Fe(2+). Its pathway is cofactor biosynthesis; adenosylcobalamin biosynthesis; precorrin-2 from uroporphyrinogen III: step 1/1. The protein operates within cofactor biosynthesis; adenosylcobalamin biosynthesis; sirohydrochlorin from precorrin-2: step 1/1. It participates in porphyrin-containing compound metabolism; siroheme biosynthesis; precorrin-2 from uroporphyrinogen III: step 1/1. It functions in the pathway porphyrin-containing compound metabolism; siroheme biosynthesis; siroheme from sirohydrochlorin: step 1/1. Its pathway is porphyrin-containing compound metabolism; siroheme biosynthesis; sirohydrochlorin from precorrin-2: step 1/1. In terms of biological role, multifunctional enzyme that catalyzes the SAM-dependent methylations of uroporphyrinogen III at position C-2 and C-7 to form precorrin-2 via precorrin-1. Then it catalyzes the NAD-dependent ring dehydrogenation of precorrin-2 to yield sirohydrochlorin. Finally, it catalyzes the ferrochelation of sirohydrochlorin to yield siroheme. The polypeptide is Siroheme synthase (Salmonella agona (strain SL483)).